Here is a 410-residue protein sequence, read N- to C-terminus: Testis-specific protein TEX28 (410 aa).

Residues 1–43 form a disordered region; the sequence is MVLKAEHTRSPSATLPSNVPSCRSLSSSEDGPSGPSSLADGGL. The segment covering 10 to 23 has biased composition (polar residues); that stretch reads SPSATLPSNVPSCR. Residues 24 to 38 are compositionally biased toward low complexity; that stretch reads SLSSSEDGPSGPSSL. Residues 93-128 are a coiled coil; that stretch reads QAFEKVNQRASATIAQIEHRLHQCHQQLQELEEGCR. The segment at 137–164 is disordered; it reads ESDPANCEPPSEKALLSEPPEPGGEDGP. Residues 185 to 245 are a coiled coil; the sequence is QGTCLETEDV…LLLESLQEEK (61 aa). A helical transmembrane segment spans residues 336–358; that stretch reads LSLATVLLVFVSTLCACPSSLIS.

The protein belongs to the TEX28 family. In terms of tissue distribution, testis specific.

The protein resides in the membrane. The sequence is that of Testis-specific protein TEX28 (TEX28) from Homo sapiens (Human).